The chain runs to 422 residues: Tyrosine--tRNA ligase (422 aa).

Tyr-37 is an L-tyrosine binding site. A 'HIGH' region motif is present at residues 42–51; the sequence is PTEESLHIGH. Residues Tyr-175 and Gln-179 each contribute to the L-tyrosine site. Residues 235-239 carry the 'KMSKS' region motif; it reads KFGKT. Residue Lys-238 coordinates ATP. Residues 357–414 enclose the S4 RNA-binding domain; it reads KDLQEALVLTSLAQSRTQAKNMIISNSISINTEKIRKNHIFHEKDKLFGKFTLLSRGK.

This sequence belongs to the class-I aminoacyl-tRNA synthetase family. TyrS type 1 subfamily. As to quaternary structure, homodimer.

It localises to the cytoplasm. The catalysed reaction is tRNA(Tyr) + L-tyrosine + ATP = L-tyrosyl-tRNA(Tyr) + AMP + diphosphate + H(+). In terms of biological role, catalyzes the attachment of tyrosine to tRNA(Tyr) in a two-step reaction: tyrosine is first activated by ATP to form Tyr-AMP and then transferred to the acceptor end of tRNA(Tyr). This Buchnera aphidicola subsp. Acyrthosiphon pisum (strain 5A) protein is Tyrosine--tRNA ligase.